The sequence spans 1231 residues: Alpha-protein kinase 1 (1231 aa).

Residues phenylalanine 61, glutamine 67, arginine 116, 150 to 153 (RQAR), aspartate 231, lysine 233, 236 to 237 (ST), and phenylalanine 295 contribute to the ADP-D-glycero-beta-D-manno-heptose site. Disordered stretches follow at residues 508 to 540 (ERVS…RSWT), 609 to 637 (GSGQ…SSRA), 692 to 739 (GSNN…GDVP), 767 to 791 (TFAP…SPSQ), 811 to 843 (PDGS…DEEG), and 859 to 888 (AHRP…PIFD). Residues 509-522 (RVSSQDSRSTASSK) show a composition bias toward polar residues. The segment covering 524–537 (SKKDQGKLQRERGR) has biased composition (basic and acidic residues). Residues 700–714 (SSHSCGSDSWSLSSS) are compositionally biased toward low complexity. Residues 775 to 784 (PEGETAESTD) are compositionally biased toward acidic residues. An Alpha-type protein kinase domain is found at 1003 to 1223 (KYSKKSELWT…ICHRLSLTRP (221 aa)).

The protein belongs to the protein kinase superfamily. Alpha-type protein kinase family. ALPK subfamily. Widely expressed. Expressed in the retina and in sweat glands, especially in the myoepithelial cells.

It is found in the cytoplasm. The protein resides in the cytosol. The protein localises to the cytoskeleton. It localises to the spindle pole. Its subcellular location is the microtubule organizing center. It is found in the centrosome. The protein resides in the cell projection. The protein localises to the cilium. The catalysed reaction is L-seryl-[protein] + ATP = O-phospho-L-seryl-[protein] + ADP + H(+). The enzyme catalyses L-threonyl-[protein] + ATP = O-phospho-L-threonyl-[protein] + ADP + H(+). Serine/threonine-protein kinase activity is stimulated upon ADP-D-glycero-beta-D-manno-heptose (ADP-Heptose)-binding. In terms of biological role, serine/threonine-protein kinase that detects bacterial pathogen-associated molecular pattern metabolites (PAMPs) and initiates an innate immune response, a critical step for pathogen elimination and engagement of adaptive immunity. Specifically recognizes and binds ADP-D-glycero-beta-D-manno-heptose (ADP-Heptose), a potent PAMP present in all Gram-negative and some Gram-positive bacteria. ADP-Heptose-binding stimulates its kinase activity to phosphorylate and activate TIFA, triggering pro-inflammatory NF-kappa-B signaling. May be involved in monosodium urate monohydrate (MSU)-induced inflammation by mediating phosphorylation of unconventional myosin MYO9A. May also play a role in apical protein transport by mediating phosphorylation of unconventional myosin MYO1A. May play a role in ciliogenesis. In Mus musculus (Mouse), this protein is Alpha-protein kinase 1.